The chain runs to 140 residues: Putative pre-16S rRNA nuclease (140 aa).

This sequence belongs to the YqgF nuclease family.

The protein localises to the cytoplasm. Could be a nuclease involved in processing of the 5'-end of pre-16S rRNA. This chain is Putative pre-16S rRNA nuclease, found in Yersinia pseudotuberculosis serotype O:1b (strain IP 31758).